The following is a 132-amino-acid chain: Phosphoribosyl-AMP cyclohydrolase (132 aa).

Residue D76 coordinates Mg(2+). C77 provides a ligand contact to Zn(2+). Mg(2+) contacts are provided by D78 and D80. The Zn(2+) site is built by C93 and C100.

This sequence belongs to the PRA-CH family. In terms of assembly, homodimer. Requires Mg(2+) as cofactor. It depends on Zn(2+) as a cofactor.

The protein localises to the cytoplasm. The catalysed reaction is 1-(5-phospho-beta-D-ribosyl)-5'-AMP + H2O = 1-(5-phospho-beta-D-ribosyl)-5-[(5-phospho-beta-D-ribosylamino)methylideneamino]imidazole-4-carboxamide. Its pathway is amino-acid biosynthesis; L-histidine biosynthesis; L-histidine from 5-phospho-alpha-D-ribose 1-diphosphate: step 3/9. Functionally, catalyzes the hydrolysis of the adenine ring of phosphoribosyl-AMP. This Methanobrevibacter smithii (strain ATCC 35061 / DSM 861 / OCM 144 / PS) protein is Phosphoribosyl-AMP cyclohydrolase.